The following is a 216-amino-acid chain: Thymidine kinase (216 aa).

ATP is bound by residues 9-16 and 86-89; these read GPMDSGKS and DEAQ. Glutamate 87 acts as the Proton acceptor in catalysis.

Belongs to the thymidine kinase family. As to quaternary structure, homotetramer.

It is found in the cytoplasm. The enzyme catalyses thymidine + ATP = dTMP + ADP + H(+). The chain is Thymidine kinase from Cutibacterium acnes (strain DSM 16379 / KPA171202) (Propionibacterium acnes).